The sequence spans 509 residues: Solute carrier family 2, facilitated glucose transporter member 4 (509 aa).

The Cytoplasmic segment spans residues 1–24; it reads MPSGFQQIGSEDGEPPQQRVTGTL. The tract at residues 7-13 is interaction with SRFBP1; sequence QIGSEDG. Position 10 is a phosphoserine (S10). Residues 25-45 form a helical membrane-spanning segment; it reads VLAVFSAVLGSLQFGYNIGVI. The Extracellular portion of the chain corresponds to 46-81; the sequence is NAPQKVIEQSYNETWLGRQGPEGPSSIPPGTLTTLW. An N-linked (GlcNAc...) asparagine glycan is attached at N57. A helical membrane pass occupies residues 82–102; it reads ALSVAIFSVGGMISSFLIGII. Residues 103-111 lie on the Cytoplasmic side of the membrane; it reads SQWLGRKRA. The chain crosses the membrane as a helical span at residues 112-132; it reads MLVNNVLAVLGGSLMGLANAA. At 133 to 142 the chain is on the extracellular side; sequence ASYEMLILGR. Residues 143–163 traverse the membrane as a helical segment; it reads FLIGAYSGLTSGLVPMYVGEI. The Cytoplasmic portion of the chain corresponds to 164-171; the sequence is APTHLRGA. A helical transmembrane segment spans residues 172-192; that stretch reads LGTLNQLAIVIGILIAQVLGL. D-glucose is bound at residue Q177. The Extracellular segment spans residues 193–201; sequence ESLLGTASL. The helical transmembrane segment at 202-222 threads the bilayer; it reads WPLLLGLTVLPALLQLVLLPF. C223 carries the S-palmitoyl cysteine lipid modification. Residues 223–287 lie on the Cytoplasmic side of the membrane; sequence CPESPRYLYI…LLGSRTHRQP (65 aa). At S274 the chain carries Phosphoserine; by SGK1. Residues 288–308 form a helical membrane-spanning segment; sequence LIIAVVLQLSQQLSGINAVFY. D-glucose is bound by residues 298-299 and N304; that span reads QQ. Residues 309-323 lie on the Extracellular side of the membrane; sequence YSTSIFETAGVGQPA. Residues 324-344 traverse the membrane as a helical segment; the sequence is YATIGAGVVNTVFTLVSVLLV. D-glucose is bound at residue N333. At 345 to 353 the chain is on the cytoplasmic side; it reads ERAGRRTLH. Residues 354-374 form a helical membrane-spanning segment; that stretch reads LLGLAGMCGCAILMTVALLLL. At 375-384 the chain is on the extracellular side; that stretch reads ERVPAMSYVS. Residues 385–405 traverse the membrane as a helical segment; the sequence is IVAIFGFVAFFEIGPGPIPWF. 2 residues coordinate D-glucose: E396 and W404. Residues 406 to 417 are Cytoplasmic-facing; that stretch reads IVAELFSQGPRP. A helical membrane pass occupies residues 418-438; sequence AAMAVAGFSNWTSNFIIGMGF. Topologically, residues 439–445 are extracellular; the sequence is QYVAEAM. Residues 446 to 466 traverse the membrane as a helical segment; sequence GPYVFLLFAVLLLGFFIFTFL. Over 467 to 509 the chain is Cytoplasmic; sequence RVPETRGRTFDQISAAFHRTPSLLEQEVKPSTELEYLGPDEND. Phosphothreonine is present on T486. Position 488 is a phosphoserine (S488). The short motif at 489-490 is the Dileucine internalization motif element; that stretch reads LL.

Belongs to the major facilitator superfamily. Sugar transporter (TC 2.A.1.1) family. Glucose transporter subfamily. As to quaternary structure, interacts with NDUFA9. Binds to DAXX. Interacts via its N-terminus with SRFBP1. Interacts with TRARG1; the interaction is required for proper SLC2A4 recycling after insulin stimulation. Sumoylated. Post-translationally, palmitoylated. Palmitoylation by ZDHHC7 controls the insulin-dependent translocation of GLUT4 to the plasma membrane. In terms of tissue distribution, skeletal and cardiac muscles; brown and white fat.

The protein resides in the cell membrane. Its subcellular location is the endomembrane system. It is found in the cytoplasm. It localises to the perinuclear region. The enzyme catalyses D-glucose(out) = D-glucose(in). In terms of biological role, insulin-regulated facilitative glucose transporter, which plays a key role in removal of glucose from circulation. Response to insulin is regulated by its intracellular localization: in the absence of insulin, it is efficiently retained intracellularly within storage compartments in muscle and fat cells. Upon insulin stimulation, translocates from these compartments to the cell surface where it transports glucose from the extracellular milieu into the cell. This is Solute carrier family 2, facilitated glucose transporter member 4 from Homo sapiens (Human).